Reading from the N-terminus, the 204-residue chain is Dephospho-CoA kinase (204 aa).

Positions 4-201 (VIGLTGGIAS…EKYLAMCKKN (198 aa)) constitute a DPCK domain. Residue 12–17 (ASGKTT) coordinates ATP.

Belongs to the CoaE family.

It is found in the cytoplasm. It carries out the reaction 3'-dephospho-CoA + ATP = ADP + CoA + H(+). It functions in the pathway cofactor biosynthesis; coenzyme A biosynthesis; CoA from (R)-pantothenate: step 5/5. In terms of biological role, catalyzes the phosphorylation of the 3'-hydroxyl group of dephosphocoenzyme A to form coenzyme A. This chain is Dephospho-CoA kinase, found in Vibrio parahaemolyticus serotype O3:K6 (strain RIMD 2210633).